Here is a 128-residue protein sequence, read N- to C-terminus: MTFASKSLLLAAVFTAVLSGGLWHRLDSTRHDNQTLRRELQTEQQARHTAEWLLHGQEQTMQVFSAIRAANRAARLADETEHHDAKEKITTAITGDNCSTRPVPAVAADRLRELEKRTRAIGGDPARN.

A helical transmembrane segment spans residues 7–23; the sequence is SLLLAAVFTAVLSGGLW. A coiled-coil region spans residues 24 to 51; that stretch reads HRLDSTRHDNQTLRRELQTEQQARHTAE.

Interacts with the spanin outer membrane subunit. Part of the spanin complex which spans the entire periplasmic space. The spanin complex is composed of spanin inner membrane subunit and spanin outer membrane subunit.

It is found in the host cell inner membrane. In terms of biological role, component of the spanin complex that disrupts the host outer membrane and causes cell lysis during virus exit. The spanin complex conducts the final step in host lysis by disrupting the outer membrane after endolysin action has degraded the host peptidoglycans. Host outer membrane disruption is possibly due to local fusion between the inner and outer membrane performed by the spanin complex. The chain is Spanin, inner membrane subunit from Escherichia phage Mu (Bacteriophage Mu).